Here is a 764-residue protein sequence, read N- to C-terminus: MFSKLTSILQHAVEALAPSLPLQEDFVYHWKAITHYYIETSDDKAPVTDTNIPSHLEQMLDILVQEENERESGETGPCMEYLLHHKILETLYTLGKADCPPGMKQQVLVFYTKLLGRIRQPLLPHINVHRPVQKLIRLCGEVLATPTENEEIQFLCIVCAKLKQDPYLVNFFLENKSKSLVSRGALSVISEDGPKGQDPGSGDVSQCQQPQELSGATGVEPTESEEEPPHQMDDLSASLDDLNVTSLPEASAVRPNQDYNLVNSLLNLTRSPDGRIAVKACEGLMLLVSLPEPAAAKCLAQSTCLCELLTGRLTSLYKALPQSVDPLDIETVEAVNWGLDSYSHKEDASAFPGKRALISFLSWFDYCDQLIKEAQKTAAVALAKAIHERFFVGVMEPQLMQTSEMGILTSTALLHRIVRQVTSDVLLQEMVVFILGEQREPETLSEISRHPLRHRLIEHCDHISDEISIMTLRMFEHLLQKPNEHILYNLVLRNLEERNYTENKPSCPEDKDVVENGLIAGAVDLEEDPLFTDISPDNTLPNQEWICSPRTSPDHPKNDGKTEVHKVVNSFLCLVPDDAKSSYHVEGTGYDTYLRDAHRQFRDYCAICSRWEWPGAPKPLEKCDLEAAFFEGHFLKVLFDRMGRILDQPYDVNLQVTSVLSRLSLFPHPHTHEYLLDPYINLASGCRSLFSVIVRVVGDLMVRIQRIQDFTPKLLLVRKRLLGLEPEGPIVDHITLLEGVIVLEEFCKELAAIAFVKYHASATP.

The segment at 190–236 (SEDGPKGQDPGSGDVSQCQQPQELSGATGVEPTESEEEPPHQMDDLS) is disordered. The segment covering 203-214 (DVSQCQQPQELS) has biased composition (polar residues).

Belongs to the FHIP family.

May be required for proper functioning of the nervous system. This chain is FHF complex subunit HOOK interacting protein 2A, found in Mus musculus (Mouse).